The chain runs to 376 residues: Chaperone protein DnaJ (376 aa).

Positions 4–68 (DYYDILGVDR…DTRSRYDQFG (65 aa)) constitute a J domain. A CR-type zinc finger spans residues 135–217 (GGEKEIRIPH…CNGAGRRQVT (83 aa)). The Zn(2+) site is built by cysteine 148, cysteine 151, cysteine 165, cysteine 168, cysteine 191, cysteine 194, cysteine 205, and cysteine 208. 4 CXXCXGXG motif repeats span residues 148-155 (CQVCKGDG), 165-172 (CSTCNGQG), 191-198 (CPACNGQG), and 205-212 (CEVCNGAG).

It belongs to the DnaJ family. Homodimer. Requires Zn(2+) as cofactor.

It is found in the cytoplasm. Participates actively in the response to hyperosmotic and heat shock by preventing the aggregation of stress-denatured proteins and by disaggregating proteins, also in an autonomous, DnaK-independent fashion. Unfolded proteins bind initially to DnaJ; upon interaction with the DnaJ-bound protein, DnaK hydrolyzes its bound ATP, resulting in the formation of a stable complex. GrpE releases ADP from DnaK; ATP binding to DnaK triggers the release of the substrate protein, thus completing the reaction cycle. Several rounds of ATP-dependent interactions between DnaJ, DnaK and GrpE are required for fully efficient folding. Also involved, together with DnaK and GrpE, in the DNA replication of plasmids through activation of initiation proteins. The polypeptide is Chaperone protein DnaJ (Crocosphaera subtropica (strain ATCC 51142 / BH68) (Cyanothece sp. (strain ATCC 51142))).